The following is a 579-amino-acid chain: MKIFVPLLSFLLAGLTTGLDWWEHGNFYQVYPRSFKDSDGDGIGDLDGVTEKLKYLKDIGMDGVWLSPIFSSPMADFGYDISNFREIQTEYGDLDAFQRLSDKCKQLGLHLILDFVPNHTSDQHEYFKKSVQKDETYKDFYVWHPGVHGPNNTKVPPSNWISVFRGSSWEWNEERQEFYLHQFLKEQPDLNYRNPAVVEEMKNVLRYWLDRGVSGFRIDAVPYLFESDIIDGRYRNEPESRTTDDPENPAYLVHTQTMDQPETYDMIYQWRAVLDEYSKTDNRTRIMMTEGYTSLPKIIEFFGNATANGAQIPFNFEVISNVKKNSTGADFATYVKRWLDAKPANRRSNWVLGNHDNNRLGSRLGENKIDLYNIALQTLPDIAVTYYGEEIGMLDQWIPWNETVDPAACRSDEASYSAYSRDPARTPMQWDSGKNAGFSKAAKTWLPVADNYKTLNVKIQDRARKSHLKIFKKLTKYRKRQILTEGDIDIKVSGENLLVYKRKVDKVGYVVVALNFGTEPVALGLSSLFDRADQRMQVVVSSNRVSTPDNVWVDVDNYVLIGESGIVLQYLWGKNPIVS.

An N-terminal signal peptide occupies residues 1–18 (MKIFVPLLSFLLAGLTTG). Residues D37, D39, D41, I43, D45, and N118 each contribute to the Ca(2+) site. Residues N118 and N151 are each glycosylated (N-linked (GlcNAc...) asparagine). D189 contributes to the Ca(2+) binding site. D219 (nucleophile) is an active-site residue. Residues Y223, L224, and E226 each coordinate Ca(2+). A glycan (N-linked (GlcNAc...) asparagine) is linked at N282. E290 functions as the Proton donor in the catalytic mechanism. N304, N325, and N401 each carry an N-linked (GlcNAc...) asparagine glycan. An N-acetyl-beta-D-glucosamine-binding site is contributed by N325.

This sequence belongs to the glycosyl hydrolase 13 family. As to expression, saliva (at protein level). Proximal lateral lobes of the salivary gland (at protein level).

It localises to the secreted. The catalysed reaction is Hydrolysis of terminal, non-reducing (1-&gt;4)-linked alpha-D-glucose residues with release of alpha-D-glucose.. Functionally, functions as a glucosidase that shows high activity toward sucrose, a major component of nectar. Assists the mosquito in its sugar-feeding capabilities. This Aedes aegypti (Yellowfever mosquito) protein is Salivary alpha-glucosidase.